The chain runs to 470 residues: Glucose-1-phosphate adenylyltransferase (470 aa).

Alpha-D-glucose 1-phosphate contacts are provided by residues glycine 164, 181 to 182 (EK), and serine 199.

Belongs to the bacterial/plant glucose-1-phosphate adenylyltransferase family. Homotetramer.

It catalyses the reaction alpha-D-glucose 1-phosphate + ATP + H(+) = ADP-alpha-D-glucose + diphosphate. Its pathway is glycan biosynthesis; glycogen biosynthesis. Functionally, involved in the biosynthesis of ADP-glucose, a building block required for the elongation reactions to produce glycogen. Catalyzes the reaction between ATP and alpha-D-glucose 1-phosphate (G1P) to produce pyrophosphate and ADP-Glc. The protein is Glucose-1-phosphate adenylyltransferase of Pseudarthrobacter chlorophenolicus (strain ATCC 700700 / DSM 12829 / CIP 107037 / JCM 12360 / KCTC 9906 / NCIMB 13794 / A6) (Arthrobacter chlorophenolicus).